The primary structure comprises 82 residues: Alpha-defensin 17 (82 aa).

Positions 1-8 are cleaved as a signal peptide; it reads LLAFQVQA. The interval 1 to 43 is disordered; sequence LLAFQVQADPIQNTDEETKTEEQPGEEDQAVSVSFGDPEGTSL. Positions 9–47 are excised as a propeptide; the sequence is DPIQNTDEETKTEEQPGEEDQAVSVSFGDPEGTSLQEES. 3 disulfide bridges follow: C53/C81, C55/C70, and C60/C80.

The protein belongs to the alpha-defensin family.

Its subcellular location is the secreted. Probably contributes to the antimicrobial barrier function of the small bowel mucosa. This is Alpha-defensin 17 (Defa17) from Mus musculus (Mouse).